The sequence spans 107 residues: Large ribosomal subunit protein uL24 (107 aa).

Belongs to the universal ribosomal protein uL24 family. As to quaternary structure, part of the 50S ribosomal subunit.

In terms of biological role, one of two assembly initiator proteins, it binds directly to the 5'-end of the 23S rRNA, where it nucleates assembly of the 50S subunit. Functionally, one of the proteins that surrounds the polypeptide exit tunnel on the outside of the subunit. The polypeptide is Large ribosomal subunit protein uL24 (Streptomyces coelicolor (strain ATCC BAA-471 / A3(2) / M145)).